Here is a 170-residue protein sequence, read N- to C-terminus: MNKARIPIALQQAVMRCLREKLQLARQHFSVEFPEPKILYQQRGTSAGTAWLQAWEIRLNPVLLMENQQPFIDEVVPHELAHLLVFRQFGRVPPHGNEWRWMMESVLQVSASRTHQFEIASVQSKTYPYRCGCQLHQLTVRRHNRVMRGESEYRCRQCGDKLKFFAGEPV.

A SprT-like domain is found at 23–164; sequence QLARQHFSVE…CRQCGDKLKF (142 aa). A Zn(2+)-binding site is contributed by His78. The active site involves Glu79. Zn(2+) is bound at residue His82.

This sequence belongs to the SprT family. It depends on Zn(2+) as a cofactor.

It localises to the cytoplasm. The protein is Protein SprT of Serratia proteamaculans (strain 568).